The chain runs to 119 residues: Phosphoribosyl-AMP cyclohydrolase (119 aa).

Asp77 contacts Mg(2+). Cys78 contributes to the Zn(2+) binding site. Mg(2+)-binding residues include Asp79 and Asp81. Positions 94 and 101 each coordinate Zn(2+).

This sequence belongs to the PRA-CH family. Homodimer. Mg(2+) serves as cofactor. Zn(2+) is required as a cofactor.

The protein localises to the cytoplasm. It carries out the reaction 1-(5-phospho-beta-D-ribosyl)-5'-AMP + H2O = 1-(5-phospho-beta-D-ribosyl)-5-[(5-phospho-beta-D-ribosylamino)methylideneamino]imidazole-4-carboxamide. It participates in amino-acid biosynthesis; L-histidine biosynthesis; L-histidine from 5-phospho-alpha-D-ribose 1-diphosphate: step 3/9. Catalyzes the hydrolysis of the adenine ring of phosphoribosyl-AMP. In Cereibacter sphaeroides (strain ATCC 17025 / ATH 2.4.3) (Rhodobacter sphaeroides), this protein is Phosphoribosyl-AMP cyclohydrolase.